A 937-amino-acid chain; its full sequence is MPPRAPPAPGPRPPPRAAGRHGLSPLAPRPWRWLLLLALPAVCSALPPPRPVYTNHWAVQVLGGPGAADRVAAAHGYLNLGQIGNLDDYYHFYHSKTFKRSTLSSRGPHTFLRMDPQVKWLQQQEVKRRVKRQARSDSLYFNDPIWSNMWYMHCADKNSRCRSEMNVQAAWKRGYTGKNVVVTILDDGIERNHPDLAPNYDSYASYDVNGNDYDPSPRYDASNENKHGTRCAGEVAASANNSYCIVGIAYNAKIGGIRMLDGDVTDVVEAKSLGIRPNYIDIYSASWGPDDDGKTVDGPGRLAKQAFEYGIKKGRQGLGSIFVWASGNGGREGDHCSCDGYTNSIYTISVSSTTENGHKPWYLEECASTLATTYSSGAFYERKIVTTDLRQRCTDGHTGTSVSAPMVAGIIALALEANNQLTWRDVQHLLVKTSRPAHLKASDWKVNGAGHKVSHLYGFGLVDAEALVLEARKWTAVPSQHMCVATADKRPRSIPVVQVLRTTALTNACADHSDQRVVYLEHVVVRISISHPRRGDLQIHLISPSGTKSQLLAKRLLDFSNEGFTNWEFMTVHCWGEKAEGEWTLEVQDIPSQVRNPEKQGKLKEWSLILYGTAEHPYRTFSSHQSRSRMLELSVPEQEPLKAEGPPPQAETPEEEEEYTGVCHPECGDKGCDGPSADQCLNCVHFSLGNSKTNRKCVSECPLGYFGDTAARRCRRCHKGCETCTGRSPTQCLSCRRGFYHHQETNTCVTLCPAGLYADESQRLCLRCHPSCQKCVDEPEKSTVCKEGFSLARGSCIPDCEPGTYFDSELIRCGECHHTCRTCVGPSREECIHCAKSFHFQDWKCVPACGEGFYPEEMPGLPHKVCRRCDENCLSCEGSSRNCSRCKAGFTQLGTSCITNHTCSNADETFCEMVKSNRLCERKLFIQFCCRTCLLAG.

Pro residues predominate over residues 1–16; it reads MPPRAPPAPGPRPPPR. The interval 1–22 is disordered; that stretch reads MPPRAPPAPGPRPPPRAAGRHG. Positions 1–45 are cleaved as a signal peptide; it reads MPPRAPPAPGPRPPPRAAGRHGLSPLAPRPWRWLLLLALPAVCSA. Residues 46–132 constitute a propeptide that is removed on maturation; that stretch reads LPPPRPVYTN…QQEVKRRVKR (87 aa). A Peptidase S8 domain is found at 149 to 468; it reads MWYMHCADKN…FGLVDAEALV (320 aa). Catalysis depends on charge relay system residues aspartate 186 and histidine 227. Asparagine 240 carries N-linked (GlcNAc...) asparagine glycosylation. Residue serine 401 is the Charge relay system of the active site. Positions 476–616 constitute a P/Homo B domain; the sequence is AVPSQHMCVA…SLILYGTAEH (141 aa). Positions 534 to 536 match the Cell attachment site motif; sequence RGD. The segment at 621–656 is disordered; sequence FSSHQSRSRMLELSVPEQEPLKAEGPPPQAETPEEE. FU repeat units lie at residues 660–707, 711–758, 762–806, 810–855, and 863–911; these read TGVC…GYFG, ARRC…GLYA, QRLC…GTYF, LIRC…GFYP, and HKVC…ETFC. Residues 680–898 form a CRM (Cys-rich motif) region; sequence CLNCVHFSLG…GFTQLGTSCI (219 aa). N-linked (GlcNAc...) asparagine glycosylation is found at asparagine 882 and asparagine 900. Residues 899-937 enclose the PLAC domain; that stretch reads TNHTCSNADETFCEMVKSNRLCERKLFIQFCCRTCLLAG.

Belongs to the peptidase S8 family. The precursor protein seems to exist in the reticulum endoplasmic as both a monomer and a dimer-sized complex whereas mature form exists only as a monomer, suggesting that propeptide cleavage affects its tertiary or quaternary structure. Interacts (immature form including the propeptide) with RCN3; probably involved in the maturation and the secretion of PCSK6. It depends on Ca(2+) as a cofactor. As to expression, high expression in the anterior pituitary and in several brain regions, the atrium, and the ventricle.

Its function is as follows. Serine endoprotease that processes various proproteins by cleavage at paired basic amino acids, recognizing the RXXX[KR]R consensus motif. Likely functions in the constitutive secretory pathway, with unique restricted distribution in both neuroendocrine and non-neuroendocrine tissues. The chain is Proprotein convertase subtilisin/kexin type 6 (Pcsk6) from Rattus norvegicus (Rat).